Reading from the N-terminus, the 647-residue chain is Acetyl-coenzyme A synthetase (647 aa).

CoA-binding positions include 189-192 (RGGK), Thr307, and Asn331. Residues 383 to 385 (GEP), 407 to 412 (DTWWQT), Asp496, and Arg511 each bind ATP. Ser519 is a binding site for CoA. An ATP-binding site is contributed by Arg522. His535 and Val538 together coordinate Mg(2+). Residue Arg580 coordinates CoA. Lys605 is modified (N6-acetyllysine).

Belongs to the ATP-dependent AMP-binding enzyme family. Requires Mg(2+) as cofactor. In terms of processing, acetylated. Deacetylation by the SIR2-homolog deacetylase activates the enzyme.

It carries out the reaction acetate + ATP + CoA = acetyl-CoA + AMP + diphosphate. Catalyzes the conversion of acetate into acetyl-CoA (AcCoA), an essential intermediate at the junction of anabolic and catabolic pathways. AcsA undergoes a two-step reaction. In the first half reaction, AcsA combines acetate with ATP to form acetyl-adenylate (AcAMP) intermediate. In the second half reaction, it can then transfer the acetyl group from AcAMP to the sulfhydryl group of CoA, forming the product AcCoA. In Syntrophus aciditrophicus (strain SB), this protein is Acetyl-coenzyme A synthetase.